The chain runs to 146 residues: Hemoglobin subunit beta (146 aa).

In terms of domain architecture, Globin spans 2-146 (FLTAEEKGLV…VASALAHRYH (145 aa)). Position 44 is a phosphoserine (Ser44). An N6-acetyllysine modification is found at Lys59. His63 contacts heme b. Lys82 carries the post-translational modification N6-acetyllysine. His92 is a heme b binding site. Cys93 carries the post-translational modification S-nitrosocysteine.

This sequence belongs to the globin family. In terms of assembly, heterotetramer of two alpha chains and two beta chains. As to expression, red blood cells.

In terms of biological role, involved in oxygen transport from the lung to the various peripheral tissues. This Paguma larvata (Masked palm civet) protein is Hemoglobin subunit beta (HBB).